The primary structure comprises 229 residues: Cytidylate kinase (229 aa).

12-20 provides a ligand contact to ATP; sequence GPSGSGKGT.

The protein belongs to the cytidylate kinase family. Type 1 subfamily.

Its subcellular location is the cytoplasm. It carries out the reaction CMP + ATP = CDP + ADP. The enzyme catalyses dCMP + ATP = dCDP + ADP. The sequence is that of Cytidylate kinase from Pseudomonas fluorescens (strain ATCC BAA-477 / NRRL B-23932 / Pf-5).